The following is a 332-amino-acid chain: Endonuclease 8-like 2 (332 aa).

P2 functions as the Schiff-base intermediate with DNA in the catalytic mechanism. E3 (proton donor) is an active-site residue. The active-site Proton donor; for beta-elimination activity is K50. K50 bears the N6-acetyllysine mark. The tract at residues 59 to 121 is disordered; that stretch reads DEEMGPPGSS…EDDSEYLERD (63 aa). S68 bears the Phosphoserine mark. The segment covering 74–84 has biased composition (basic and acidic residues); that stretch reads PQKEVQKEGAA. The segment covering 94–104 has biased composition (polar residues); it reads GQKTLDGSSRS. K154 is modified (N6-acetyllysine). Residue N231 participates in DNA binding. Residues 284–320 form an FPG-type zinc finger; the sequence is QVYQKEQCPAGHQVMKEAFGPEDGLQRLTWWCPQCQP. R310 acts as the Proton donor; for delta-elimination activity in catalysis.

It belongs to the FPG family. Binds EP300. Detected in testis, skeletal muscle, heart, brain, placenta, lung, pancreas, kidney and liver.

It localises to the nucleus. The catalysed reaction is 2'-deoxyribonucleotide-(2'-deoxyribose 5'-phosphate)-2'-deoxyribonucleotide-DNA = a 3'-end 2'-deoxyribonucleotide-(2,3-dehydro-2,3-deoxyribose 5'-phosphate)-DNA + a 5'-end 5'-phospho-2'-deoxyribonucleoside-DNA + H(+). Its activity is regulated as follows. Acetylation of Lys-50 leads to loss of DNA nicking activity. Acetylation of Lys-154 has no effect. Its function is as follows. Involved in base excision repair of DNA damaged by oxidation or by mutagenic agents. Has DNA glycosylase activity towards 5-hydroxyuracil and other oxidized derivatives of cytosine with a preference for mismatched double-stranded DNA (DNA bubbles). Has low or no DNA glycosylase activity towards thymine glycol, 2-hydroxyadenine, hypoxanthine and 8-oxoguanine. Has AP (apurinic/apyrimidinic) lyase activity and introduces nicks in the DNA strand. Cleaves the DNA backbone by beta-delta elimination to generate a single-strand break at the site of the removed base with both 3'- and 5'-phosphates. This Homo sapiens (Human) protein is Endonuclease 8-like 2 (NEIL2).